We begin with the raw amino-acid sequence, 354 residues long: Inositol-tetrakisphosphate 1-kinase 1 (354 aa).

Residues 1 to 16 are compositionally biased toward basic and acidic residues; the sequence is MRVHEEASEDKEREVE. A disordered region spans residues 1 to 24; that stretch reads MRVHEEASEDKEREVEEAPDLMPL. The 1D-myo-inositol 1,3,4-trisphosphate site is built by Lys53 and Lys95. ATP is bound by residues Arg130 and Lys180. The ATP-grasp domain occupies 140 to 347; it reads LNLSNAYGEV…FLLSLVQNKY (208 aa). The 1D-myo-inositol 1,3,4-trisphosphate site is built by His191 and Lys223. Residues 212–223 and Ser238 each bind ATP; that span reads QEFVNHGGILFK. Positions 303, 318, and 320 each coordinate Mg(2+). Position 320 (Asn320) interacts with 1D-myo-inositol 1,3,4-trisphosphate.

Belongs to the ITPK1 family. In terms of assembly, monomer. Requires Mg(2+) as cofactor. In terms of tissue distribution, expressed in roots, leaves, flowers, anthers and embryos.

The enzyme catalyses 1D-myo-inositol 3,4,5,6-tetrakisphosphate + ATP = 1D-myo-inositol 1,3,4,5,6-pentakisphosphate + ADP + H(+). The catalysed reaction is 1D-myo-inositol 1,3,4-trisphosphate + ATP = 1D-myo-inositol 1,3,4,5-tetrakisphosphate + ADP + H(+). It catalyses the reaction 1D-myo-inositol 1,3,4-trisphosphate + ATP = 1D-myo-inositol 1,3,4,6-tetrakisphosphate + ADP + H(+). In terms of biological role, kinase that can phosphorylate various inositol polyphosphate such as Ins(3,4,5,6)P4 or Ins(1,3,4)P3 and participates in phytic acid biosynthesis in developing seeds. Phytic acid is the primary storage form of phosphorus in cereal grains and other plant seeds. The sequence is that of Inositol-tetrakisphosphate 1-kinase 1 from Oryza sativa subsp. japonica (Rice).